Consider the following 93-residue polypeptide: Cell division protein FtsB (93 aa).

Over 1-3 the chain is Cytoplasmic; sequence MRL. Residues 4–21 traverse the membrane as a helical segment; the sequence is FILSLFALLVMFQYDFWF. The Periplasmic segment spans residues 22–93; it reads GKNGYLDYQD…FYRIVKNKNR (72 aa). The stretch at 28–76 forms a coiled coil; that stretch reads DYQDIKAEIIQRKQENKKLSQRNQTIFAEIQDLKNGIEAIEERARMEHE.

It belongs to the FtsB family. As to quaternary structure, part of a complex composed of FtsB, FtsL and FtsQ.

The protein resides in the cell inner membrane. Functionally, essential cell division protein. May link together the upstream cell division proteins, which are predominantly cytoplasmic, with the downstream cell division proteins, which are predominantly periplasmic. This Histophilus somni (strain 129Pt) (Haemophilus somnus) protein is Cell division protein FtsB.